The chain runs to 80 residues: Large ribosomal subunit protein bL31 (80 aa).

Residues cysteine 16, cysteine 18, cysteine 38, and cysteine 41 each coordinate Zn(2+).

It belongs to the bacterial ribosomal protein bL31 family. Type A subfamily. In terms of assembly, part of the 50S ribosomal subunit. Requires Zn(2+) as cofactor.

Binds the 23S rRNA. The polypeptide is Large ribosomal subunit protein bL31 (Rhodococcus jostii (strain RHA1)).